Consider the following 175-residue polypeptide: Peptide deformylase (175 aa).

Fe cation is bound by residues C96 and H138. E139 is an active-site residue. H142 is a Fe cation binding site.

It belongs to the polypeptide deformylase family. The cofactor is Fe(2+).

The enzyme catalyses N-terminal N-formyl-L-methionyl-[peptide] + H2O = N-terminal L-methionyl-[peptide] + formate. In terms of biological role, removes the formyl group from the N-terminal Met of newly synthesized proteins. Requires at least a dipeptide for an efficient rate of reaction. N-terminal L-methionine is a prerequisite for activity but the enzyme has broad specificity at other positions. This is Peptide deformylase from Campylobacter jejuni subsp. jejuni serotype O:2 (strain ATCC 700819 / NCTC 11168).